The chain runs to 388 residues: F-box protein At4g00893 (388 aa).

A disordered region spans residues 1 to 30 (MLPSPSVHMASPPPSLNMASHPPSPATASR). An F-box domain is found at 42 to 88 (NPSFADLPSSLIEEIMLLLVLKDNIRASAACKSWYEAGVSVRVVDKH).

In Arabidopsis thaliana (Mouse-ear cress), this protein is F-box protein At4g00893.